Consider the following 568-residue polypeptide: Alpha-1,3-galactosidase A (568 aa).

An N-terminal signal peptide occupies residues 1 to 17; the sequence is MMSVWFIQLAIFAQSRI. 6 PbH1 repeats span residues 87–125, 243–265, 299–321, 409–431, 432–454, and 465–486; these read LYLN…VLKN, SKGI…VCQY, RGMI…NIHG, TPEV…LITT, RRKS…FVAD, and VHDL…ISID.

It belongs to the glycosyl hydrolase 110 family. A subfamily.

It catalyses the reaction Hydrolysis of terminal, non-reducing branched (1-&gt;3)-alpha-D-galactosidic residues, producing free D-galactose.. The catalysed reaction is Hydrolysis of terminal, non-reducing alpha-D-galactose residues in alpha-D-galactosides, including galactose oligosaccharides, galactomannans and galactolipids.. Alpha-galactosidase that specifically removes branched alpha-1,3-linked galactose residues present in blood group B antigens. Has no activity toward linear alpha-1,3-linked galactose residues. The chain is Alpha-1,3-galactosidase A (glaA) from Bacteroides thetaiotaomicron (strain ATCC 29148 / DSM 2079 / JCM 5827 / CCUG 10774 / NCTC 10582 / VPI-5482 / E50).